Consider the following 621-residue polypeptide: Phosphatidylinositol-3,5-bisphosphate 3-phosphatase MTMR6 (621 aa).

The region spanning 1-101 (MEHIRTTKVE…YNSLLQLSKQ (101 aa)) is the GRAM domain. The interval 2–141 (EHIRTTKVEQ…EEYKRMGVPN (140 aa)) is interaction with RAB1B. Residue tyrosine 108 is modified to Phosphotyrosine. Positions 124 to 499 (GWQLIDLAEE…FNFKFWRNMY (376 aa)) constitute a Myotubularin phosphatase domain. Residues asparagine 248, asparagine 273, and isoleucine 274 each contribute to the a 1,2-diacyl-sn-glycero-3-phospho-(1D-myo-inositol-3,5-bisphosphate) site. Residues asparagine 248, asparagine 273, and isoleucine 274 each contribute to the a 1,2-diacyl-sn-glycero-3-phospho-(1D-myo-inositol-3-phosphate) site. Cysteine 336 functions as the Phosphocysteine intermediate in the catalytic mechanism. A 1,2-diacyl-sn-glycero-3-phospho-(1D-myo-inositol-3,5-bisphosphate)-binding residues include serine 337, aspartate 338, glycine 339, tryptophan 340, aspartate 341, arginine 342, lysine 378, and arginine 382. 6 residues coordinate a 1,2-diacyl-sn-glycero-3-phospho-(1D-myo-inositol-3-phosphate): serine 337, aspartate 338, glycine 339, tryptophan 340, aspartate 341, and arginine 342. A 1,2-diacyl-sn-glycero-3-phospho-(1D-myo-inositol-3-phosphate) is bound at residue arginine 382. 4 positions are modified to phosphoserine: serine 556, serine 561, serine 589, and serine 611.

Belongs to the protein-tyrosine phosphatase family. Non-receptor class myotubularin subfamily. Homodimer. Heterodimer (via C-terminus) with MTMR9 (via C-terminus). Interacts with ALKBH4. Interacts with KCNN4. Interacts (via GRAM domain) with RAB1B (in GDP-bound form); the interaction regulates MTMR6 recruitment to the endoplasmic reticulum-Golgi intermediate compartment. In terms of tissue distribution, expressed in CD4+ T-cells.

It is found in the cytoplasm. Its subcellular location is the endoplasmic reticulum-Golgi intermediate compartment. The protein resides in the endoplasmic reticulum. It localises to the cell projection. The protein localises to the ruffle membrane. It is found in the perinuclear region. It carries out the reaction a 1,2-diacyl-sn-glycero-3-phospho-(1D-myo-inositol-3,5-bisphosphate) + H2O = a 1,2-diacyl-sn-glycero-3-phospho-(1D-myo-inositol-5-phosphate) + phosphate. The catalysed reaction is a 1,2-diacyl-sn-glycero-3-phospho-(1D-myo-inositol-3-phosphate) + H2O = a 1,2-diacyl-sn-glycero-3-phospho-(1D-myo-inositol) + phosphate. The enzyme catalyses 1,2-dioctanoyl-sn-glycero-3-phospho-(1D-myo-inositol-3,5-bisphosphate) + H2O = 1,2-dioctanoyl-sn-glycero-3-phospho-(1D-myo-inositol-5-phosphate) + phosphate. It catalyses the reaction 1,2-dioctanoyl-sn-glycero-3-phospho-(1-D-myo-inositol-3-phosphate) + H2O = 1,2-dioctanoyl-sn-glycero-3-phospho-(1D-myo-inositol) + phosphate. Its activity is regulated as follows. Allosterically activated by phosphatidylserine and/or phosphatidylinositol 4-phosphate (PtdIns(4)P), and phosphatidylinositol 5-phosphate (PtdIns(5)P). Interaction with MTMR9 increases catalytic activity towards phosphatidylinositol 3,5-bisphosphate. In terms of biological role, lipid phosphatase that specifically dephosphorylates the D-3 position of phosphatidylinositol 3-phosphate and phosphatidylinositol 3,5-bisphosphate, generating phosphatidylinositol and phosphatidylinositol 5-phosphate. Binds with high affinity to phosphatidylinositol 3,5-bisphosphate (PtdIns(3,5)P2) but also to phosphatidylinositol 3-phosphate (PtdIns(3)P), phosphatidylinositol 4-phosphate (PtdIns(4)P), and phosphatidylinositol 5-phosphate (PtdIns(5)P), phosphatidic acid and phosphatidylserine. Negatively regulates ER-Golgi protein transport. Probably in association with MTMR9, plays a role in the late stages of macropinocytosis by dephosphorylating phosphatidylinositol 3-phosphate in membrane ruffles. Acts as a negative regulator of KCNN4/KCa3.1 channel activity in CD4(+) T-cells possibly by decreasing intracellular levels of phosphatidylinositol 3-phosphate. Negatively regulates proliferation of reactivated CD4(+) T-cells. In complex with MTMR9, negatively regulates DNA damage-induced apoptosis. The formation of the MTMR6-MTMR9 complex stabilizes both MTMR6 and MTMR9 protein levels. The protein is Phosphatidylinositol-3,5-bisphosphate 3-phosphatase MTMR6 of Homo sapiens (Human).